Here is a 993-residue protein sequence, read N- to C-terminus: Replication protein 1a (993 aa).

The methyltransferase stretch occupies residues 51–409; it reads NVLGVKDSEV…TIVINGMSMQ (359 aa). The region spanning 72–290 is the Alphavirus-like MT domain; it reads HLTQQEFAPH…HDWENIRSFL (219 aa). Residues 543-576 are disordered; the sequence is EVSDRPEAPSPTPDDPADVCGKEQEVSELDSLSA. The (+)RNA virus helicase ATP-binding domain maps to 684–838; the sequence is NSECVVCNNE…KIIPDETSDA (155 aa). The interval 712 to 975 is ATP-dependent helicase; the sequence is VDGVAGCGKT…LTRHKVTFRY (264 aa). ATP is bound at residue 714–721; that stretch reads GVAGCGKT. Residues 839–993 enclose the (+)RNA virus helicase C-terminal domain; it reads DTTFRSPQDV…DLIAECIARA (155 aa).

It belongs to the bromoviridae replication protein 1a family. Interacts with RNA-directed RNA polymerase 2a.

The protein resides in the host endoplasmic reticulum membrane. Involved in the virus replication. Contains a helicase domain and a methyltransferase domain. The methyltransferase domain is probably involved in viral RNA capping. Involved in the formation of ER membrane spherular invaginations in which RNA replication complexes form. This chain is Replication protein 1a, found in Cucumber mosaic virus (strain Ixora) (CMV).